The following is a 195-amino-acid chain: Peptidyl-tRNA hydrolase (195 aa).

Residue tyrosine 17 coordinates tRNA. The Proton acceptor role is filled by histidine 22. Tyrosine 68, asparagine 70, and asparagine 116 together coordinate tRNA.

This sequence belongs to the PTH family. As to quaternary structure, monomer.

It localises to the cytoplasm. It catalyses the reaction an N-acyl-L-alpha-aminoacyl-tRNA + H2O = an N-acyl-L-amino acid + a tRNA + H(+). Hydrolyzes ribosome-free peptidyl-tRNAs (with 1 or more amino acids incorporated), which drop off the ribosome during protein synthesis, or as a result of ribosome stalling. Functionally, catalyzes the release of premature peptidyl moieties from peptidyl-tRNA molecules trapped in stalled 50S ribosomal subunits, and thus maintains levels of free tRNAs and 50S ribosomes. This chain is Peptidyl-tRNA hydrolase, found in Shewanella baltica (strain OS155 / ATCC BAA-1091).